Here is a 270-residue protein sequence, read N- to C-terminus: Diaminopimelate epimerase (270 aa).

Asn-15, Gln-49, and Asn-66 together coordinate substrate. The Proton donor role is filled by Cys-75. Residues 76-77, Asn-155, Asn-187, and 204-205 contribute to the substrate site; these read GN and ER. Cys-213 serves as the catalytic Proton acceptor. A substrate-binding site is contributed by 214 to 215; sequence GS.

The protein belongs to the diaminopimelate epimerase family. Homodimer.

The protein localises to the cytoplasm. The enzyme catalyses (2S,6S)-2,6-diaminopimelate = meso-2,6-diaminopimelate. It participates in amino-acid biosynthesis; L-lysine biosynthesis via DAP pathway; DL-2,6-diaminopimelate from LL-2,6-diaminopimelate: step 1/1. Functionally, catalyzes the stereoinversion of LL-2,6-diaminopimelate (L,L-DAP) to meso-diaminopimelate (meso-DAP), a precursor of L-lysine and an essential component of the bacterial peptidoglycan. The chain is Diaminopimelate epimerase from Rickettsia akari (strain Hartford).